Here is a 398-residue protein sequence, read N- to C-terminus: S-adenosylmethionine synthase (398 aa).

Residue H17 participates in ATP binding. A Mg(2+)-binding site is contributed by D19. E45 is a binding site for K(+). The L-methionine site is built by E58 and Q101. The segment at 101–111 (QSPDIAQGVDK) is flexible loop. Residues 176–178 (DGK), 243–244 (RF), D252, 258–259 (RK), and K279 each bind ATP. D252 is an L-methionine binding site. K283 contacts L-methionine.

It belongs to the AdoMet synthase family. As to quaternary structure, homotetramer; dimer of dimers. It depends on Mg(2+) as a cofactor. K(+) is required as a cofactor.

It is found in the cytoplasm. It carries out the reaction L-methionine + ATP + H2O = S-adenosyl-L-methionine + phosphate + diphosphate. The protein operates within amino-acid biosynthesis; S-adenosyl-L-methionine biosynthesis; S-adenosyl-L-methionine from L-methionine: step 1/1. Functionally, catalyzes the formation of S-adenosylmethionine (AdoMet) from methionine and ATP. The overall synthetic reaction is composed of two sequential steps, AdoMet formation and the subsequent tripolyphosphate hydrolysis which occurs prior to release of AdoMet from the enzyme. The polypeptide is S-adenosylmethionine synthase (Staphylococcus haemolyticus (strain JCSC1435)).